The following is a 384-amino-acid chain: Tryptophan--tRNA ligase (384 aa).

The 'HIGH' region motif lies at 81–89 (PSGPMHIGH). A 'KMSKS' region motif is present at residues 252–256 (KMSAS).

Belongs to the class-I aminoacyl-tRNA synthetase family.

The protein localises to the cytoplasm. The enzyme catalyses tRNA(Trp) + L-tryptophan + ATP = L-tryptophyl-tRNA(Trp) + AMP + diphosphate + H(+). This is Tryptophan--tRNA ligase from Thermococcus kodakarensis (strain ATCC BAA-918 / JCM 12380 / KOD1) (Pyrococcus kodakaraensis (strain KOD1)).